The primary structure comprises 138 residues: Small ribosomal subunit protein uS11c (138 aa).

The tract at residues 1-22 is disordered; it reads MAKPIPKIGSRKNARSGSRKHL. A compositionally biased stretch (basic residues) spans 9–22; it reads GSRKNARSGSRKHL.

Belongs to the universal ribosomal protein uS11 family. As to quaternary structure, part of the 30S ribosomal subunit.

It is found in the plastid. It localises to the chloroplast. This chain is Small ribosomal subunit protein uS11c, found in Lotus japonicus (Lotus corniculatus var. japonicus).